Reading from the N-terminus, the 536-residue chain is Coilin (536 aa).

Residues 96–316 (AETCNDGAQN…QHSQSPTSDS (221 aa)) are disordered. Residues 171–180 (KTHKGKRTKK) are compositionally biased toward basic residues. The segment covering 181–192 (KSEAPIENPPDK) has biased composition (basic and acidic residues). Low complexity predominate over residues 213-238 (QTSSSDSSDTSSCSDQPTPTTQQKPQ). 2 stretches are compositionally biased toward polar residues: residues 239–257 (SSAK…THSV) and 303–316 (THIQ…TSDS). 2 consecutive repeat copies span residues 353 to 358 (RGRGRG) and 380 to 385 (RGRGRG). The segment at 353 to 385 (RGRGRGEDFSWRGQRGRWFRGQGNNSNRGRGRG) is 2 X 6 AA repeats of R-G-R-G-R-G. The tract at residues 368 to 387 (GRWFRGQGNNSNRGRGRGDS) is disordered. Residues 371-380 (FRGQGNNSNR) show a composition bias toward low complexity. Residues 425-523 (DYSSLPLLAA…VMLNWNTLIE (99 aa)) form the Tudor; atypical domain.

This sequence belongs to the coilin family. In terms of tissue distribution, expressed in both oocytes and somatic cells.

Its subcellular location is the nucleus. This chain is Coilin (coil), found in Xenopus laevis (African clawed frog).